The chain runs to 147 residues: uncharacterized protein (147 aa).

The 104-residue stretch at 44 to 147 folds into the HTH LytTR-type domain; it reads LVGYIDKEIH…LKSIKERLSI (104 aa).

It localises to the cytoplasm. This is an uncharacterized protein from Staphylococcus aureus (strain MRSA252).